The primary structure comprises 65 residues: Alpha-conotoxin Mr1.1 (65 aa).

The first 21 residues, Met-1–Ser-21, serve as a signal peptide directing secretion. The propeptide occupies Phe-22 to Lys-48. Intrachain disulfides connect Cys-50/Cys-56 and Cys-51/Cys-64. A ser-Xaa-Pro motif, crucial for potent interaction with nAChR region spans residues Ser-52–Pro-54. Cys-64 carries the cysteine amide modification.

This sequence belongs to the conotoxin A superfamily. As to expression, expressed by the venom duct.

It localises to the secreted. Alpha-conotoxins act on postsynaptic membranes, they bind to the nicotinic acetylcholine receptors (nAChR) and thus inhibit them. This toxin potently and reversibly inhibits alpha-9-alpha-10/CHRNA9-CHRNA10 (IC(50)=92 nM (human) and IC(50)=8.3 nM (rat)) and human alpha3-beta-2/CHRNA3-CHRNB2 nAChR (IC(50)=218.9 nM). Also moderately inhibits human alpha-3-beta-4/CHRNA3-CHRNB4 (60% inhibition at 1 uM), rat alpha-7/CHRNA7 (65% inhibition at 1 uM) and rat alpha-3-beta-2/CHRNA3-CHRNB2 nAChR (50-70% inhibition at 10 uM). In two rat pain models, this toxin shows analgesic effect. The chain is Alpha-conotoxin Mr1.1 from Conus marmoreus (Marble cone).